A 307-amino-acid chain; its full sequence is Methionyl-tRNA formyltransferase (307 aa).

Position 108-111 (108-111 (SLLP)) interacts with (6S)-5,6,7,8-tetrahydrofolate.

Belongs to the Fmt family.

It carries out the reaction L-methionyl-tRNA(fMet) + (6R)-10-formyltetrahydrofolate = N-formyl-L-methionyl-tRNA(fMet) + (6S)-5,6,7,8-tetrahydrofolate + H(+). Attaches a formyl group to the free amino group of methionyl-tRNA(fMet). The formyl group appears to play a dual role in the initiator identity of N-formylmethionyl-tRNA by promoting its recognition by IF2 and preventing the misappropriation of this tRNA by the elongation apparatus. In Stenotrophomonas maltophilia (strain R551-3), this protein is Methionyl-tRNA formyltransferase.